Reading from the N-terminus, the 419-residue chain is Acyl transferase 9 (419 aa).

Active-site proton acceptor residues include His161 and Asp362.

Belongs to the plant acyltransferase family.

In terms of biological role, involved in the incorporation of ferulate into the cell wall. May act as arabinoxylan feruloyl transferase. In Oryza sativa subsp. japonica (Rice), this protein is Acyl transferase 9.